We begin with the raw amino-acid sequence, 270 residues long: MSNVRSDKPFTLAGRTFQSRLLVGTGKYRDMEETRLATEASGAEIVTVAVRRTNLGQNAGEPNLLDVLSPDKYTILPNTAGCFDAVEAVRTCRLARELLDGRKSHESRTLVKLEVLADQKTLFPNVIETLKAAEVLVKEGFDVMVYTSDDPIIARQLAEVGCIAVMPLAGLIGTGLGICNPYNLQIILEESKVPVLVDAGVGTASDATIAMEMGCEAVLMNSAIAHAQQPVLMAEAMKHAIVAGRMAYLAGRMPKKLYASASSPLDGLIK.

Lys-112 serves as the catalytic Schiff-base intermediate with DXP. 1-deoxy-D-xylulose 5-phosphate is bound by residues Gly-173, 199-200 (AG), and 221-222 (NS).

It belongs to the ThiG family. Homotetramer. Forms heterodimers with either ThiH or ThiS.

Its subcellular location is the cytoplasm. The catalysed reaction is [ThiS sulfur-carrier protein]-C-terminal-Gly-aminoethanethioate + 2-iminoacetate + 1-deoxy-D-xylulose 5-phosphate = [ThiS sulfur-carrier protein]-C-terminal Gly-Gly + 2-[(2R,5Z)-2-carboxy-4-methylthiazol-5(2H)-ylidene]ethyl phosphate + 2 H2O + H(+). It functions in the pathway cofactor biosynthesis; thiamine diphosphate biosynthesis. In terms of biological role, catalyzes the rearrangement of 1-deoxy-D-xylulose 5-phosphate (DXP) to produce the thiazole phosphate moiety of thiamine. Sulfur is provided by the thiocarboxylate moiety of the carrier protein ThiS. In vitro, sulfur can be provided by H(2)S. This chain is Thiazole synthase, found in Pseudomonas putida (strain ATCC 700007 / DSM 6899 / JCM 31910 / BCRC 17059 / LMG 24140 / F1).